We begin with the raw amino-acid sequence, 282 residues long: Shikimate dehydrogenase (NADP(+)) (282 aa).

Shikimate contacts are provided by residues 15–17 (SKS) and Thr-62. The Proton acceptor role is filled by Lys-66. Residues Asn-87 and Asp-103 each contribute to the shikimate site. NADP(+) is bound by residues 127-131 (GAGGA), 151-156 (NRTHTK), and Met-220. Tyr-222 contributes to the shikimate binding site. Gly-244 provides a ligand contact to NADP(+).

This sequence belongs to the shikimate dehydrogenase family. As to quaternary structure, homodimer.

It carries out the reaction shikimate + NADP(+) = 3-dehydroshikimate + NADPH + H(+). It participates in metabolic intermediate biosynthesis; chorismate biosynthesis; chorismate from D-erythrose 4-phosphate and phosphoenolpyruvate: step 4/7. Its function is as follows. Involved in the biosynthesis of the chorismate, which leads to the biosynthesis of aromatic amino acids. Catalyzes the reversible NADPH linked reduction of 3-dehydroshikimate (DHSA) to yield shikimate (SA). This chain is Shikimate dehydrogenase (NADP(+)), found in Shewanella putrefaciens (strain CN-32 / ATCC BAA-453).